A 257-amino-acid polypeptide reads, in one-letter code: E3 ubiquitin-protein ligase RNF170 (257 aa).

Topologically, residues 1 to 24 are lumenal; it reads MADNQEERPHFPLDEGSIIEGVSD. Residues 25–45 traverse the membrane as a helical segment; sequence QVIVVVLLSFVAVGSLIYLLL. The Cytoplasmic portion of the chain corresponds to 46–200; sequence RNDEQNIHPE…GGLFWMFRIR (155 aa). An RING-type zinc finger spans residues 87–130; sequence CPVCLQQATFPVETNCGHLFCGSCIIAYWRYGTWLGAINCPICR. Residues 201-221 form a helical membrane-spanning segment; the sequence is IVLCLLGALLYLVSPLDIIPE. Position 222 (alanine 222) is a topological domain, lumenal. Residues 223–243 form a helical membrane-spanning segment; sequence LFGILGFLDDLFVLFLLLIYI. Residues 244–257 lie on the Cytoplasmic side of the membrane; the sequence is SIMYREVVTQRLYR.

The protein resides in the endoplasmic reticulum membrane. The catalysed reaction is S-ubiquitinyl-[E2 ubiquitin-conjugating enzyme]-L-cysteine + [acceptor protein]-L-lysine = [E2 ubiquitin-conjugating enzyme]-L-cysteine + N(6)-ubiquitinyl-[acceptor protein]-L-lysine.. It participates in protein modification; protein ubiquitination. In terms of biological role, E3 ubiquitin-protein ligase that plays an essential role in stimulus-induced inositol 1,4,5-trisphosphate receptor (ITPR) ubiquitination and degradation via the endoplasmic reticulum-associated degradation (ERAD) pathway. Also involved in ITPR turnover in resting cells. This is E3 ubiquitin-protein ligase RNF170 (rnf170) from Xenopus laevis (African clawed frog).